The primary structure comprises 295 residues: Ribosomal RNA small subunit methyltransferase A (295 aa).

6 residues coordinate S-adenosyl-L-methionine: asparagine 29, leucine 31, glycine 56, glutamate 77, aspartate 102, and asparagine 128.

It belongs to the class I-like SAM-binding methyltransferase superfamily. rRNA adenine N(6)-methyltransferase family. RsmA subfamily.

It is found in the cytoplasm. It carries out the reaction adenosine(1518)/adenosine(1519) in 16S rRNA + 4 S-adenosyl-L-methionine = N(6)-dimethyladenosine(1518)/N(6)-dimethyladenosine(1519) in 16S rRNA + 4 S-adenosyl-L-homocysteine + 4 H(+). Functionally, specifically dimethylates two adjacent adenosines (A1518 and A1519) in the loop of a conserved hairpin near the 3'-end of 16S rRNA in the 30S particle. May play a critical role in biogenesis of 30S subunits. This is Ribosomal RNA small subunit methyltransferase A from Listeria monocytogenes serotype 4a (strain HCC23).